The chain runs to 491 residues: Delayed-rectifier potassium channel regulatory subunit KCNS3 (491 aa).

Over 1 to 182 (MVFGEFFHRP…IRMENPAYCL (182 aa)) the chain is Cytoplasmic. Residues 183–204 (SAKLIAISSLSVVLASIVAMCV) traverse the membrane as a helical segment. The Extracellular portion of the chain corresponds to 205-220 (HSMSEFQNEDGEVDDP). A helical transmembrane segment spans residues 221–243 (VLEGVEIACIAWFTGELAIRLVA). Residues 244–254 (APSQKKFWKNP) are Cytoplasmic-facing. Residues 255 to 275 (LNIIDFVSIIPFYATLAVDTK) form a helical membrane-spanning segment. The Extracellular segment spans residues 276–285 (EEESEDIENM). The helical; Voltage-sensor transmembrane segment at 286–306 (GKVVQILRLMRIFRILKLARH) threads the bilayer. Topologically, residues 307-321 (SVGLRSLGATLRHSY) are cytoplasmic. Residues 322–343 (HEVGLLLLFLSVGISIFSVLIY) form a helical membrane-spanning segment. The Extracellular segment spans residues 344–357 (SVEKDELASSLTSI). An intramembrane region (helical) is located at residues 358-369 (PICWWWATISMT). Positions 370–375 (TVGYGD) match the Selectivity filter motif. Residues 370–377 (TVGYGDTH) lie within the membrane without spanning it. The Extracellular segment spans residues 378 to 384 (PVTLAGK). The chain crosses the membrane as a helical span at residues 385–413 (IIASTCIICGILVVALPITIIFNKFSKYY). The Cytoplasmic segment spans residues 414-491 (QKQKDMDVDQ…TASLENCTAK (78 aa)).

Belongs to the potassium channel family. S (TC 1.A.1.2) subfamily. Kv9.3/KCNS3 sub-subfamily. Heterotetramer with KCNB1. Does not form homomultimers. In terms of tissue distribution, expressed in myocytes. Detected in lung, spleen, brain and heart.

The protein resides in the cell membrane. Its function is as follows. Potassium channel regulatory subunit that modulates the delayed rectifier potassium channel activity of KCNB1 by namely slowing down the deactivation and inactivation time constants. While it does not form functional channel on its own, it can form functional heterotetrameric channels with KCNB1. In Rattus norvegicus (Rat), this protein is Delayed-rectifier potassium channel regulatory subunit KCNS3.